Here is a 126-residue protein sequence, read N- to C-terminus: UPF0292 protein TSIB_0423 (126 aa).

The region spanning 20-100 (NGVILVEGMR…RVDTNTRREL (81 aa)) is the Toprim domain. Mg(2+)-binding residues include E26, D69, and D71.

This sequence belongs to the UPF0292 family. It depends on Mg(2+) as a cofactor.

In Thermococcus sibiricus (strain DSM 12597 / MM 739), this protein is UPF0292 protein TSIB_0423.